A 113-amino-acid polypeptide reads, in one-letter code: Large ribosomal subunit protein bL19 (113 aa).

Belongs to the bacterial ribosomal protein bL19 family.

In terms of biological role, this protein is located at the 30S-50S ribosomal subunit interface and may play a role in the structure and function of the aminoacyl-tRNA binding site. This chain is Large ribosomal subunit protein bL19, found in Mycobacterium marinum (strain ATCC BAA-535 / M).